The following is a 507-amino-acid chain: Desmethyl-deoxy-podophyllotoxin synthase (507 aa).

A helical membrane pass occupies residues 1-21 (MEFLSFPLSSALLIILLFMLV). Residue cysteine 440 participates in heme binding.

Belongs to the cytochrome P450 family. Requires heme as cofactor. In terms of tissue distribution, rhizome-specific expression.

It localises to the membrane. The catalysed reaction is (-)-deoxypodophyllotoxin + reduced [NADPH--hemoprotein reductase] + O2 = (-)-4'-desmethyl-deoxypodophyllotoxin + formaldehyde + oxidized [NADPH--hemoprotein reductase] + H2O + H(+). It participates in aromatic compound metabolism; phenylpropanoid biosynthesis. Functionally, cytochrome P450 involved in the biosynthesis of etoposide, a chemotherapeutic compound of the topoisomerase inhibitor family. Catalyzes the conversion of deoxypodophyllotoxin to desmethyl-deoxypodophyllotoxin. This Sinopodophyllum hexandrum (Himalayan may apple) protein is Desmethyl-deoxy-podophyllotoxin synthase.